Consider the following 728-residue polypeptide: Diacylglycerol kinase 1 (728 aa).

The chain crosses the membrane as a helical span at residues 27–48; it reads GLMFSCFVAALVGILTIAYTAF. 2 Phorbol-ester/DAG-type zinc fingers span residues 79–137 and 149–212; these read PHSW…PKDC and VHQW…GDIC. Disordered stretches follow at residues 265–296 and 308–336; these read KQTNETSADTGNSGSNCDESTESTADTGPTVN and VMNGDSSNGDSDSNGKLEKKPSVKRTGSF. Positions 267–294 are enriched in polar residues; sequence TNETSADTGNSGSNCDESTESTADTGPT. Positions 310–319 are enriched in low complexity; sequence NGDSSNGDSD. The 140-residue stretch at 357–496 folds into the DAGKc domain; it reads SDARPLLVFI…LDRWKVSILN (140 aa). Glycyl lysine isopeptide (Lys-Gly) (interchain with G-Cter in ubiquitin) cross-links involve residues K491 and K500.

The protein belongs to the eukaryotic diacylglycerol kinase family. Monomer. Expressed in roots, shoots, and leaves.

It localises to the membrane. It carries out the reaction a 1,2-diacyl-sn-glycerol + ATP = a 1,2-diacyl-sn-glycero-3-phosphate + ADP + H(+). Phosphorylates the second messenger diacylglycerol (DAG) to generate phosphatidic acid (PA), another important signaling molecule. PA is required for plant development and responses to abiotic stress and pathogen attack. May be involved in the accumulation of PA during cold stress. The protein is Diacylglycerol kinase 1 (DGK1) of Arabidopsis thaliana (Mouse-ear cress).